Reading from the N-terminus, the 117-residue chain is Immunoglobulin heavy variable 3-74 (117 aa).

The signal sequence occupies residues 1 to 19; the sequence is MEFGLSWVFLVAILKGVQC. Positions 20-44 are framework-1; it reads EVQLVESGGGLVQPGGSLRLSCAAS. Positions 20–117 constitute an Ig-like domain; the sequence is EVQLVESGGG…EDTAVYYCAR (98 aa). C41 and C115 are disulfide-bonded. A complementarity-determining-1 region spans residues 45–52; that stretch reads GFTFSSYW. Residues 53–69 are framework-2; the sequence is MHWVRQAPGKGLVWVSR. The interval 70–77 is complementarity-determining-2; it reads INSDGSST. The tract at residues 78-115 is framework-3; the sequence is SYADSVKGRFTISRDNAKNTLYLQMNSLRAEDTAVYYC. Residues 116–117 are complementarity-determining-3; it reads AR.

As to quaternary structure, immunoglobulins are composed of two identical heavy chains and two identical light chains; disulfide-linked.

The protein localises to the secreted. It is found in the cell membrane. In terms of biological role, v region of the variable domain of immunoglobulin heavy chains that participates in the antigen recognition. Immunoglobulins, also known as antibodies, are membrane-bound or secreted glycoproteins produced by B lymphocytes. In the recognition phase of humoral immunity, the membrane-bound immunoglobulins serve as receptors which, upon binding of a specific antigen, trigger the clonal expansion and differentiation of B lymphocytes into immunoglobulins-secreting plasma cells. Secreted immunoglobulins mediate the effector phase of humoral immunity, which results in the elimination of bound antigens. The antigen binding site is formed by the variable domain of one heavy chain, together with that of its associated light chain. Thus, each immunoglobulin has two antigen binding sites with remarkable affinity for a particular antigen. The variable domains are assembled by a process called V-(D)-J rearrangement and can then be subjected to somatic hypermutations which, after exposure to antigen and selection, allow affinity maturation for a particular antigen. This is Immunoglobulin heavy variable 3-74 from Homo sapiens (Human).